Consider the following 713-residue polypeptide: Ribosomal RNA large subunit methyltransferase K/L (713 aa).

Positions 43–154 (LLYRALLWSR…RDQVMLSLDL (112 aa)) constitute a THUMP domain.

Belongs to the methyltransferase superfamily. RlmKL family.

Its subcellular location is the cytoplasm. The enzyme catalyses guanosine(2445) in 23S rRNA + S-adenosyl-L-methionine = N(2)-methylguanosine(2445) in 23S rRNA + S-adenosyl-L-homocysteine + H(+). It carries out the reaction guanosine(2069) in 23S rRNA + S-adenosyl-L-methionine = N(2)-methylguanosine(2069) in 23S rRNA + S-adenosyl-L-homocysteine + H(+). Functionally, specifically methylates the guanine in position 2445 (m2G2445) and the guanine in position 2069 (m7G2069) of 23S rRNA. The protein is Ribosomal RNA large subunit methyltransferase K/L of Sodalis glossinidius (strain morsitans).